Consider the following 67-residue polypeptide: Putative sodium channel alpha-toxin Acra7 (67 aa).

The 65-residue stretch at 2–66 folds into the LCN-type CS-alpha/beta domain; it reads RDGYIVKPTN…PIKDPNQDCT (65 aa). 4 disulfide bridges follow: cysteine 12/cysteine 65, cysteine 16/cysteine 37, cysteine 23/cysteine 47, and cysteine 27/cysteine 49. Position 67 (arginine 67) is a propeptide, removed by a carboxypeptidase.

The protein belongs to the long (4 C-C) scorpion toxin superfamily. Sodium channel inhibitor family. Alpha subfamily. In terms of tissue distribution, expressed by the venom gland.

It is found in the secreted. Functionally, alpha toxins bind voltage-independently at site-3 of sodium channels (Nav) and inhibit the inactivation of the activated channels, thereby blocking neuronal transmission. This chain is Putative sodium channel alpha-toxin Acra7, found in Androctonus crassicauda (Arabian fat-tailed scorpion).